The primary structure comprises 374 residues: tRNA (adenine(58)-N(1))-methyltransferase catalytic subunit TRM61 (374 aa).

Residues 120–122 (SGS), Glu-138, Arg-143, 167–168 (DV), and Asp-202 contribute to the S-adenosyl-L-methionine site.

This sequence belongs to the class I-like SAM-binding methyltransferase superfamily. TRM61 family. As to quaternary structure, heterotetramer; composed of two copies of TRM6 and two copies of TRM61.

Its subcellular location is the nucleus. The enzyme catalyses adenosine(58) in tRNA + S-adenosyl-L-methionine = N(1)-methyladenosine(58) in tRNA + S-adenosyl-L-homocysteine + H(+). In terms of biological role, catalytic subunit of tRNA (adenine-N(1)-)-methyltransferase, which catalyzes the formation of N(1)-methyladenine at position 58 (m1A58) in initiator methionyl-tRNA. This Candida glabrata (strain ATCC 2001 / BCRC 20586 / JCM 3761 / NBRC 0622 / NRRL Y-65 / CBS 138) (Yeast) protein is tRNA (adenine(58)-N(1))-methyltransferase catalytic subunit TRM61 (TRM61).